The following is a 319-amino-acid chain: L-galactose dehydrogenase (319 aa).

Catalysis depends on Y59, which acts as the Proton donor. The region spanning 122–269 (HCHDIEFGSL…ANKEISSVLV (148 aa)) is the SIS domain. A substrate-binding site is contributed by H124.

This sequence belongs to the aldo/keto reductase family.

The enzyme catalyses L-galactose + NAD(+) = L-galactono-1,4-lactone + NADH + H(+). Its function is as follows. Catalyzes the oxidation of L-galactose to L-galactono-1,4-lactone in the presence of NAD(+). Uses NAD(+) as a hydrogen acceptor much more efficiently than NADP(+). The chain is L-galactose dehydrogenase (LGALDH) from Arabidopsis thaliana (Mouse-ear cress).